A 446-amino-acid polypeptide reads, in one-letter code: Tetratricopeptide repeat protein 23 (446 aa).

TPR repeat units follow at residues 45 to 78, 137 to 170, 186 to 219, 310 to 347, and 356 to 389; these read LRLSEEKAKSYASSHEYKKALHELVHCMALTRIC, VELFHTLGQALLSLQKFKEASKNLTKAEILSKEM, ARIKLSFAQVYQGQKKSKEALPHYQEALEYTEIS, TAKFLSIQDDYCHFLQVTGQDEKATSIFRESLEAKVAV, and AETYRLLGVADLAQGNQTGAHKKLKKCLQIQTLL. Residues 410–446 are disordered; the sequence is APEVPARPRPSPGAKAAFCAGGRPYSVPGRTRPSAAD.

Associated with the EvC complex composed of EFCAB7, IQCE, EVC2 and EVC.

It localises to the cell projection. The protein localises to the cilium. Functionally, participates positively in the ciliary Hedgehog (Hh) signaling. The chain is Tetratricopeptide repeat protein 23 (TTC23) from Bos taurus (Bovine).